Consider the following 423-residue polypeptide: Histidine--tRNA ligase (423 aa).

It belongs to the class-II aminoacyl-tRNA synthetase family. As to quaternary structure, homodimer.

It is found in the cytoplasm. It catalyses the reaction tRNA(His) + L-histidine + ATP = L-histidyl-tRNA(His) + AMP + diphosphate + H(+). The chain is Histidine--tRNA ligase from Rhodococcus opacus (strain B4).